We begin with the raw amino-acid sequence, 479 residues long: Aspartyl/glutamyl-tRNA(Asn/Gln) amidotransferase subunit B (479 aa).

This sequence belongs to the GatB/GatE family. GatB subfamily. Heterotrimer of A, B and C subunits.

It catalyses the reaction L-glutamyl-tRNA(Gln) + L-glutamine + ATP + H2O = L-glutaminyl-tRNA(Gln) + L-glutamate + ADP + phosphate + H(+). The catalysed reaction is L-aspartyl-tRNA(Asn) + L-glutamine + ATP + H2O = L-asparaginyl-tRNA(Asn) + L-glutamate + ADP + phosphate + 2 H(+). Functionally, allows the formation of correctly charged Asn-tRNA(Asn) or Gln-tRNA(Gln) through the transamidation of misacylated Asp-tRNA(Asn) or Glu-tRNA(Gln) in organisms which lack either or both of asparaginyl-tRNA or glutaminyl-tRNA synthetases. The reaction takes place in the presence of glutamine and ATP through an activated phospho-Asp-tRNA(Asn) or phospho-Glu-tRNA(Gln). The sequence is that of Aspartyl/glutamyl-tRNA(Asn/Gln) amidotransferase subunit B from Streptococcus pyogenes serotype M12 (strain MGAS2096).